Here is an 842-residue protein sequence, read N- to C-terminus: Homeobox-leucine zipper protein REVOLUTA (842 aa).

Positions 1–20 are disordered; it reads MEMAVANHRERSSDSMNRHL. Residues 7 to 20 show a composition bias toward basic and acidic residues; sequence NHRERSSDSMNRHL. The homeobox DNA-binding region spans 22–85; that stretch reads SSGKYVRYTA…NRRCRDKQRK (64 aa). Positions 90–121 form a coiled coil; that stretch reads LQSVNRKLSAMNKLLMEENDRLQKQVSQLVCE. The region spanning 151-379 is the START domain; the sequence is DANSPAGLLS…LAQESNGEVV (229 aa).

The protein belongs to the HD-ZIP homeobox family. Class III subfamily. Homodimer. Heterodimer with ZPR1, ZPR2, ZPR3 or ZPR4. Interacts with ESR1 and ESR2. Interacts with ZPR1, ZPR2, ZPR3 and ZPR4. Heterodimerization with ZPR3 prevents DNA binding by REV. As to expression, expressed in the interfascicular regions of stem and vascular bundles of young roots and leaves.

It is found in the nucleus. Its function is as follows. Probable transcription factor involved in the regulation of interfascicular fiber (cortical cells) and secondary xylem differentiation in the inflorescence stems. Required for lateral shoot meristems (LSMs) and flower meristems (FMs) initiation. May be involved in the determination of vascular patterning and organ polarity. Directly regulates the expression of AGO10, ZPR1, ZPR2, ZPR3 and ZPR4. Required to regulate adaxial-abaxial polarity and leaf axial patterning. The polypeptide is Homeobox-leucine zipper protein REVOLUTA (Arabidopsis thaliana (Mouse-ear cress)).